A 638-amino-acid polypeptide reads, in one-letter code: ABC transporter G family member 12 (638 aa).

The segment at 42-61 (KQEKAKKKNDTESSTGDMNT) is disordered. The 244-residue stretch at 58-301 (DMNTGVSTTI…SLGYPCPNNT (244 aa)) folds into the ABC transporter domain. 91–98 (GPSGSGKS) provides a ligand contact to ATP. An ABC transmembrane type-2 domain is found at 374–633 (GNFVARVGTA…WTSYLALHFL (260 aa)). 7 consecutive transmembrane segments (helical) span residues 376–396 (FVAR…CFAG), 410–430 (TIFF…SLFL), 459–479 (TLIV…FAHL), 484–504 (GHFF…DFMI), 516–536 (MTFA…GFYV), 544–564 (SFGW…LVVN), and 612–632 (FGVV…ALHF).

This sequence belongs to the ABC transporter superfamily. ABCG family. Eye pigment precursor importer (TC 3.A.1.204) subfamily.

Its subcellular location is the membrane. In Dictyostelium discoideum (Social amoeba), this protein is ABC transporter G family member 12 (abcG12).